Consider the following 612-residue polypeptide: MLEGLGSPASPRAAASASVAGSSGPAACSPPSSSAPRSPESPAPRRGGVRASVPQKLAEMLSSQYGLIVFVAGLLLLLAWAVHAAGVSKSDLLCFLTALMLLQLLWMLWYVGRSSAHRRLFRLKDTHAGAGWLRGSITLFAVITVILGCLKIGYFIGFSECLSATEGVFPVTHSVHTLLQVYFLWGHAKDIIQSFKTLERFGVIHSVFTNLLLWANGVLNESKHQLNEHKERLITLGFGNITTVLDDHTPQCNCTPPTLCTAISHGIYYLYPFNIEYQILASTMLYVLWKNIGRKVDSHQHQKMQFKSDGVMVGAVLGLTVLAATIAVVVVYLIHIGRSKTKSESALIMFYLYAITLLMLMGAAGLAGIRIYRIDEKSLDESKNPARKLDSDLLVGTASGSWLISWGSILAILCAEGHPRYTWYNLPYSILAIVEKYIQNLFIFESIHREPEKLSEDIQTLRVVTVCNGNTMPLASSCPKSGGVARDVAPQGKDMPPAANGNVCMRESHDKEEEKQEESSWGGSPSPVRLPRFLQGNAKRKVLRNIAAFLFLCNISLWIPPAFGCRPEYDNGLEEIVFGFEPWIIVVNLAMPFSIFYRMHAAASLFEVYCKI.

Over residues 1–46 the composition is skewed to low complexity; it reads MLEGLGSPASPRAAASASVAGSSGPAACSPPSSSAPRSPESPAPRR. The tract at residues 1-50 is disordered; sequence MLEGLGSPASPRAAASASVAGSSGPAACSPPSSSAPRSPESPAPRRGGVR. The Cytoplasmic segment spans residues 1-58; it reads MLEGLGSPASPRAAASASVAGSSGPAACSPPSSSAPRSPESPAPRRGGVRASVPQKLA. The chain crosses the membrane as a helical span at residues 59–80; that stretch reads EMLSSQYGLIVFVAGLLLLLAW. Over 81–88 the chain is Extracellular; sequence AVHAAGVS. A helical transmembrane segment spans residues 89 to 112; that stretch reads KSDLLCFLTALMLLQLLWMLWYVG. The Cytoplasmic segment spans residues 113-130; it reads RSSAHRRLFRLKDTHAGA. A helical membrane pass occupies residues 131-153; the sequence is GWLRGSITLFAVITVILGCLKIG. The Extracellular portion of the chain corresponds to 154–163; the sequence is YFIGFSECLS. A helical membrane pass occupies residues 164–188; the sequence is ATEGVFPVTHSVHTLLQVYFLWGHA. Residues 189-196 are Cytoplasmic-facing; sequence KDIIQSFK. A helical membrane pass occupies residues 197-223; it reads TLERFGVIHSVFTNLLLWANGVLNESK. Residues 224–264 are Extracellular-facing; it reads HQLNEHKERLITLGFGNITTVLDDHTPQCNCTPPTLCTAIS. The chain crosses the membrane as a helical span at residues 265-290; the sequence is HGIYYLYPFNIEYQILASTMLYVLWK. The Cytoplasmic segment spans residues 291–311; sequence NIGRKVDSHQHQKMQFKSDGV. Residues 312 to 334 form a helical membrane-spanning segment; sequence MVGAVLGLTVLAATIAVVVVYLI. The Extracellular segment spans residues 335 to 344; the sequence is HIGRSKTKSE. Residues 345 to 370 traverse the membrane as a helical segment; sequence SALIMFYLYAITLLMLMGAAGLAGIR. Residues 371–388 lie on the Cytoplasmic side of the membrane; it reads IYRIDEKSLDESKNPARK. Residues 389–413 traverse the membrane as a helical segment; the sequence is LDSDLLVGTASGSWLISWGSILAIL. The Extracellular portion of the chain corresponds to 414 to 423; the sequence is CAEGHPRYTW. Residues 424-444 traverse the membrane as a helical segment; it reads YNLPYSILAIVEKYIQNLFIF. Residues 445-544 lie on the Cytoplasmic side of the membrane; that stretch reads ESIHREPEKL…QGNAKRKVLR (100 aa). Residues 499–525 form a disordered region; it reads ANGNVCMRESHDKEEEKQEESSWGGSP. The span at 506–518 shows a compositional bias: basic and acidic residues; that stretch reads RESHDKEEEKQEE. Residues 545-563 traverse the membrane as a helical segment; that stretch reads NIAAFLFLCNISLWIPPAF. Topologically, residues 564–581 are extracellular; that stretch reads GCRPEYDNGLEEIVFGFE. Residues 582-605 traverse the membrane as a helical segment; the sequence is PWIIVVNLAMPFSIFYRMHAAASL. The Cytoplasmic portion of the chain corresponds to 606 to 612; the sequence is FEVYCKI.

Belongs to the otopetrin family. In terms of assembly, homodimer. Interacts with STAT1, independently of STAT1 phosphorylation status.

The protein resides in the cell membrane. It localises to the cell projection. Its subcellular location is the microvillus. It catalyses the reaction H(+)(in) = H(+)(out). With respect to regulation, activated by both acid and alkali, with proton influx in response to extracellular acid and proton efflux during alkali stimulation. Inhibited by Zn(2+); this inhibition is thought to be pH-sensitive. Currents evoked in response to mild acid (pH 6.0) stimulus may also be mildly potentiated by exposure to Zn(2+). Activated by NH(4)Cl. Proton-selective ion channel. Biphasically modulated by acid and alkali, mediating proton influx and efflux in response to extracellular acid and base stimulation, respectively. Sour taste receptor, which carries inward currents in response to extracellular acidification. Sensor for ammonium chloride (NH(4)Cl) in taste receptor cells. NH(4)Cl acts by increasing the intracellular pH, thereby generating a driving force for proton entry through OTOP1 channel. Might also participate in alkaline sensation. Plays a role in the regulation of Ca(2+) flux in response to purigenic (ATP, ADP and UDP) stimuli, leading to increase in cytosolic Ca(2+) due to influx of extracellular calcium. May play this role by inhibiting P2Y purinoceptor-mediated Ca(2+) release in a Ca(2+)-dependent manner and promote an influx of Ca(2+) in response to ATP. Through this mechanism and possibly others, plays a role in the formation and function of calcium carbonate-based structures in the vestibular system of the inner ear, called otoconia, that sense gravity and linear acceleration. In obesity, may attenuate adipose tissue inflammation, through the negative regulation of IFNG signaling, hence may play an adaptive role in the maintainance of metabolic homeostasis. Following alkali activation, may also be permeable Na(+), K(+), Cs(+) and Li(+). This is Proton channel OTOP1 from Homo sapiens (Human).